Here is a 152-residue protein sequence, read N- to C-terminus: UPF0178 protein YaiI (152 aa).

Belongs to the UPF0178 family.

The polypeptide is UPF0178 protein YaiI (Escherichia coli O6:K15:H31 (strain 536 / UPEC)).